The sequence spans 377 residues: Mitogen-activated protein kinase mpkC (377 aa).

The Protein kinase domain occupies Tyr-20–Leu-299. ATP is bound by residues Ile-26–Val-34 and Lys-49. Asp-141 serves as the catalytic Proton acceptor. Thr-171 bears the Phosphothreonine mark. Positions Thr-171–Tyr-173 match the TXY motif. Residue Tyr-173 is modified to Phosphotyrosine.

This sequence belongs to the protein kinase superfamily. Ser/Thr protein kinase family. MAP kinase subfamily. HOG1 sub-subfamily. Requires Mg(2+) as cofactor. Post-translationally, dually phosphorylated on Thr-171 and Tyr-173, which activates the enzyme.

It catalyses the reaction L-seryl-[protein] + ATP = O-phospho-L-seryl-[protein] + ADP + H(+). The enzyme catalyses L-threonyl-[protein] + ATP = O-phospho-L-threonyl-[protein] + ADP + H(+). With respect to regulation, activated by tyrosine and threonine phosphorylation. Functionally, mitogen-activated protein kinase required for growth on media where sorbitol or mannitol is the sole carbon source. The protein is Mitogen-activated protein kinase mpkC (mpkc) of Neosartorya fischeri (strain ATCC 1020 / DSM 3700 / CBS 544.65 / FGSC A1164 / JCM 1740 / NRRL 181 / WB 181) (Aspergillus fischerianus).